We begin with the raw amino-acid sequence, 339 residues long: Exopolyphosphatase 1 (339 aa).

Positions 315-339 are disordered; that stretch reads QTSVRDTRGQEVDRNAANRSRGDKT. The segment covering 319–339 has biased composition (basic and acidic residues); sequence RDTRGQEVDRNAANRSRGDKT.

This sequence belongs to the GppA/Ppx family. In terms of assembly, homodimer.

The catalysed reaction is [phosphate](n) + H2O = [phosphate](n-1) + phosphate + H(+). Functionally, degradation of inorganic polyphosphates (polyP). Releases orthophosphate processively from the ends of the polyP chain. This Mycobacterium leprae (strain TN) protein is Exopolyphosphatase 1.